The primary structure comprises 603 residues: Isocitrate dehydrogenase kinase/phosphatase (603 aa).

ATP-binding positions include 327-333 and Lys348; that span reads APGIKGL. The active site involves Asp383.

The protein belongs to the AceK family.

The protein resides in the cytoplasm. It catalyses the reaction L-seryl-[isocitrate dehydrogenase] + ATP = O-phospho-L-seryl-[isocitrate dehydrogenase] + ADP + H(+). In terms of biological role, bifunctional enzyme which can phosphorylate or dephosphorylate isocitrate dehydrogenase (IDH) on a specific serine residue. This is a regulatory mechanism which enables bacteria to bypass the Krebs cycle via the glyoxylate shunt in response to the source of carbon. When bacteria are grown on glucose, IDH is fully active and unphosphorylated, but when grown on acetate or ethanol, the activity of IDH declines drastically concomitant with its phosphorylation. In Burkholderia mallei (strain ATCC 23344), this protein is Isocitrate dehydrogenase kinase/phosphatase.